Here is a 103-residue protein sequence, read N- to C-terminus: ATP synthase F(0) complex subunit g, mitochondrial (103 aa).

A2 carries the post-translational modification N-acetylalanine. N6-acetyllysine is present on residues K11, K24, K35, and K54.

This sequence belongs to the ATPase g subunit family. In terms of assembly, component of the ATP synthase complex composed at least of ATP5F1A/subunit alpha, ATP5F1B/subunit beta, ATP5MC1/subunit c (homooctomer), MT-ATP6/subunit a, MT-ATP8/subunit 8, ATP5ME/subunit e, ATP5MF/subunit f, ATP5MG/subunit g, ATP5MK/subunit k, ATP5MJ/subunit j, ATP5F1C/subunit gamma, ATP5F1D/subunit delta, ATP5F1E/subunit epsilon, ATP5PF/subunit F6, ATP5PB/subunit b, ATP5PD/subunit d, ATP5PO/subunit OSCP. ATP synthase complex consists of a soluble F(1) head domain (subunits alpha(3) and beta(3)) - the catalytic core - and a membrane F(0) domain - the membrane proton channel (subunits c, a, 8, e, f, g, k and j). These two domains are linked by a central stalk (subunits gamma, delta, and epsilon) rotating inside the F1 region and a stationary peripheral stalk (subunits F6, b, d, and OSCP).

The protein localises to the mitochondrion. The protein resides in the mitochondrion inner membrane. In terms of biological role, subunit g, of the mitochondrial membrane ATP synthase complex (F(1)F(0) ATP synthase or Complex V) that produces ATP from ADP in the presence of a proton gradient across the membrane which is generated by electron transport complexes of the respiratory chain. ATP synthase complex consist of a soluble F(1) head domain - the catalytic core - and a membrane F(1) domain - the membrane proton channel. These two domains are linked by a central stalk rotating inside the F(1) region and a stationary peripheral stalk. During catalysis, ATP synthesis in the catalytic domain of F(1) is coupled via a rotary mechanism of the central stalk subunits to proton translocation. In vivo, can only synthesize ATP although its ATP hydrolase activity can be activated artificially in vitro. Part of the complex F(0) domain. This chain is ATP synthase F(0) complex subunit g, mitochondrial, found in Mus musculus (Mouse).